We begin with the raw amino-acid sequence, 53 residues long: UPF0391 membrane protein Bxeno_A1464 (53 aa).

Helical transmembrane passes span 5 to 25 (AAIF…GIAA) and 30 to 50 (IAKV…LMGV).

This sequence belongs to the UPF0391 family.

It localises to the cell membrane. The chain is UPF0391 membrane protein Bxeno_A1464 from Paraburkholderia xenovorans (strain LB400).